Consider the following 358-residue polypeptide: DnaJ homolog subfamily B member 11 (358 aa).

The N-terminal stretch at 1-22 (MAPQNLSTFCLLLLYLIGTVIA) is a signal peptide. In terms of domain architecture, J spans 25 to 90 (DFYKILGVPR…EKRKQYDTYG (66 aa)). Thr188 bears the Phosphothreonine mark. An N-linked (GlcNAc...) asparagine glycan is attached at Asn261.

As to quaternary structure, part of a large chaperone multiprotein complex comprising DNAJB11, HSP90B1, HSPA5, HYOU, PDIA2, PDIA4, PDIA6, PPIB, SDF2L1, UGGT1 and very small amounts of ERP29, but not, or at very low levels, CALR nor CANX. Binds to denatured substrates in an ATP-independent manner. Interacts via the J domain with HSPA5 in an ATP-dependent manner. Post-translationally, contains high-mannose Endo H-sensitive carbohydrates. In terms of processing, cys-169, Cys-171, Cys-193 and Cys-196 form intramolecular disulfide bonds. The preferential partner for each Cys is not known.

The protein resides in the endoplasmic reticulum lumen. Functionally, as a co-chaperone for HSPA5 it is required for proper folding, trafficking or degradation of proteins. Binds directly to both unfolded proteins that are substrates for ERAD and nascent unfolded peptide chains, but dissociates from the HSPA5-unfolded protein complex before folding is completed. May help recruiting HSPA5 and other chaperones to the substrate. Stimulates HSPA5 ATPase activity. It is necessary for maturation and correct trafficking of PKD1. This Mus musculus (Mouse) protein is DnaJ homolog subfamily B member 11 (Dnajb11).